The sequence spans 458 residues: tRNA modification GTPase MnmE (458 aa).

(6S)-5-formyl-5,6,7,8-tetrahydrofolate contacts are provided by Arg-22, Glu-84, and Arg-123. Residues 220–379 form the TrmE-type G domain; sequence GIATAIIGRP…LEKAIADLFF (160 aa). Asn-230 is a binding site for K(+). Residues 230-235, 249-255, and 274-277 contribute to the GTP site; these read NVGKSS, TDIAGTT, and DTAG. Ser-234 provides a ligand contact to Mg(2+). K(+) is bound by residues Thr-249, Ile-251, and Thr-254. Thr-255 lines the Mg(2+) pocket. Lys-458 lines the (6S)-5-formyl-5,6,7,8-tetrahydrofolate pocket.

This sequence belongs to the TRAFAC class TrmE-Era-EngA-EngB-Septin-like GTPase superfamily. TrmE GTPase family. Homodimer. Heterotetramer of two MnmE and two MnmG subunits. The cofactor is K(+).

The protein resides in the cytoplasm. Its function is as follows. Exhibits a very high intrinsic GTPase hydrolysis rate. Involved in the addition of a carboxymethylaminomethyl (cmnm) group at the wobble position (U34) of certain tRNAs, forming tRNA-cmnm(5)s(2)U34. This is tRNA modification GTPase MnmE from Bacillus thuringiensis (strain Al Hakam).